Here is a 30-residue protein sequence, read N- to C-terminus: NLYQFGGMIGCANKGTRSWLSYVNYGCYCG.

2 residues coordinate Ca(2+): tyrosine 28 and glycine 30.

Ca(2+) is required as a cofactor. Contains seven disulfide bonds. As to expression, expressed by the venom gland.

Its subcellular location is the secreted. The catalysed reaction is a 1,2-diacyl-sn-glycero-3-phosphocholine + H2O = a 1-acyl-sn-glycero-3-phosphocholine + a fatty acid + H(+). In terms of biological role, snake venom phospholipase A2 (PLA2) that has myotoxic activity but no significant neurotoxicity. PLA2 catalyzes the calcium-dependent hydrolysis of the 2-acyl groups in 3-sn-phosphoglycerides. This chain is Phospholipase A2 acanmyotoxin-2, found in Acanthophis sp. (strain Seram) (Seram death adder).